The primary structure comprises 89 residues: Putative defensin-like protein 40 (89 aa).

Positions 1–26 (MAGIANGVGLLISFMLICGGMPKGHA) are cleaved as a signal peptide. 4 cysteine pairs are disulfide-bonded: Cys33–Cys88, Cys46–Cys69, Cys55–Cys81, and Cys59–Cys83.

Belongs to the DEFL family.

It localises to the secreted. The sequence is that of Putative defensin-like protein 40 from Arabidopsis thaliana (Mouse-ear cress).